We begin with the raw amino-acid sequence, 452 residues long: Growth/differentiation factor 6 (452 aa).

Positions 1 to 22 are cleaved as a signal peptide; sequence MDTPRVLLWAIFLISFLWDLPG. A propeptide spanning residues 23–332 is cleaved from the precursor; the sequence is FQQASISSSS…LPSPGRRRRR (310 aa). The disordered stretch occupies residues 29–93; it reads SSSSSTELDS…QEPPGRGPRV (65 aa). 2 stretches are compositionally biased toward basic and acidic residues: residues 37–46 and 58–75; these read DSTKDVENRK and AEGR…ELRR. N-linked (GlcNAc...) asparagine glycosylation occurs at N115. Disordered stretches follow at residues 244 to 267 and 301 to 348; these read RDSG…LGFG and AEAA…KKSR. Positions 301–317 are enriched in low complexity; sequence AEAAGAEGSWPAPSGAP. Residues 327 to 348 are compositionally biased toward basic residues; that stretch reads GRRRRRTALSSRHGKRHGKKSR. 3 disulfide bridges follow: C351–C417, C380–C449, and C384–C451.

Belongs to the TGF-beta family. As to quaternary structure, homodimer; disulfide-linked.

It localises to the secreted. Growth factor that controls proliferation and cellular differentiation in the retina and bone formation. Plays a key role in regulating apoptosis during retinal development. Establishes dorsal-ventral positional information in the retina and controls the formation of the retinotectal map. Required for normal formation of bones and joints in the limbs, skull, digits and axial skeleton. Plays a key role in establishing boundaries between skeletal elements during development. Regulation of GDF6 expression seems to be a mechanism for evolving species-specific changes in skeletal structures. Seems to positively regulate differentiation of chondrogenic tissue through the growth factor receptors subunits BMPR1A, BMPR1B, BMPR2 and ACVR2A, leading to the activation of SMAD1-SMAD5-SMAD8 complex. The regulation of chondrogenic differentiation is inhibited by NOG. Also involved in the induction of adipogenesis from mesenchymal stem cells. This mechanism acts through the growth factor receptors subunits BMPR1A, BMPR2 and ACVR2A and the activation of SMAD1-SMAD5-SMAD8 complex and MAPK14/p38. The protein is Growth/differentiation factor 6 (Gdf6) of Rattus norvegicus (Rat).